The primary structure comprises 180 residues: Nucleoside-triphosphatase THEP1 (180 aa).

ATP-binding positions include Gly-9 to Thr-16 and Leu-104 to Gly-111.

The protein belongs to the THEP1 NTPase family.

The enzyme catalyses a ribonucleoside 5'-triphosphate + H2O = a ribonucleoside 5'-diphosphate + phosphate + H(+). Functionally, has nucleotide phosphatase activity towards ATP, GTP, CTP, TTP and UTP. May hydrolyze nucleoside diphosphates with lower efficiency. The protein is Nucleoside-triphosphatase THEP1 of Thermococcus kodakarensis (strain ATCC BAA-918 / JCM 12380 / KOD1) (Pyrococcus kodakaraensis (strain KOD1)).